Reading from the N-terminus, the 884-residue chain is Alanine--tRNA ligase (884 aa).

The Zn(2+) site is built by histidine 570, histidine 574, cysteine 676, and histidine 680.

The protein belongs to the class-II aminoacyl-tRNA synthetase family. Zn(2+) is required as a cofactor.

The protein localises to the cytoplasm. The catalysed reaction is tRNA(Ala) + L-alanine + ATP = L-alanyl-tRNA(Ala) + AMP + diphosphate. Catalyzes the attachment of alanine to tRNA(Ala) in a two-step reaction: alanine is first activated by ATP to form Ala-AMP and then transferred to the acceptor end of tRNA(Ala). Also edits incorrectly charged Ser-tRNA(Ala) and Gly-tRNA(Ala) via its editing domain. The protein is Alanine--tRNA ligase of Lawsonia intracellularis (strain PHE/MN1-00).